The following is a 339-amino-acid chain: Phenylalanine--tRNA ligase alpha subunit (339 aa).

Glutamate 254 serves as a coordination point for Mg(2+).

It belongs to the class-II aminoacyl-tRNA synthetase family. Phe-tRNA synthetase alpha subunit type 1 subfamily. Tetramer of two alpha and two beta subunits. Requires Mg(2+) as cofactor.

Its subcellular location is the cytoplasm. It carries out the reaction tRNA(Phe) + L-phenylalanine + ATP = L-phenylalanyl-tRNA(Phe) + AMP + diphosphate + H(+). This Clostridium novyi (strain NT) protein is Phenylalanine--tRNA ligase alpha subunit.